A 153-amino-acid chain; its full sequence is Type II secretion system core protein G (153 aa).

Residues 1–7 constitute a propeptide, leader sequence; it reads MERRQRG. Phenylalanine 8 is subject to N-methylphenylalanine. A helical transmembrane segment spans residues 8-28; it reads FTLLEIMVVIVILGVLASLVV. Disordered regions lie at residues 68–91 and 126–153; these read EQGL…PQDG and MPDT…NGNP. Low complexity predominate over residues 134 to 143; that stretch reads GNWNVGNGAH. Positions 144-153 are enriched in gly residues; sequence NNGGNGNGNP.

The protein belongs to the GSP G family. As to quaternary structure, type II secretion system is composed of four main components: the outer membrane complex, the inner membrane complex, the cytoplasmic secretion ATPase and the periplasm-spanning pseudopilus. Forms homomultimers. In terms of processing, cleaved by the prepilin peptidase. Methylated by prepilin peptidase at the amino group of the N-terminal phenylalanine once the leader sequence is cleaved.

It localises to the cell inner membrane. Core component of the type II secretion system required for the energy-dependent secretion of extracellular factors such as proteases and toxins from the periplasm. Pseudopilin (pilin-like) protein that polymerizes to form the pseudopilus. Further polymerization triggers pseudopilus growth. The chain is Type II secretion system core protein G (outG) from Dickeya chrysanthemi (Pectobacterium chrysanthemi).